A 238-amino-acid chain; its full sequence is Ubiquinone biosynthesis O-methyltransferase (238 aa).

R36, G56, D77, and M125 together coordinate S-adenosyl-L-methionine.

Belongs to the methyltransferase superfamily. UbiG/COQ3 family.

It catalyses the reaction a 3-demethylubiquinol + S-adenosyl-L-methionine = a ubiquinol + S-adenosyl-L-homocysteine + H(+). The catalysed reaction is a 3-(all-trans-polyprenyl)benzene-1,2-diol + S-adenosyl-L-methionine = a 2-methoxy-6-(all-trans-polyprenyl)phenol + S-adenosyl-L-homocysteine + H(+). It functions in the pathway cofactor biosynthesis; ubiquinone biosynthesis. Functionally, O-methyltransferase that catalyzes the 2 O-methylation steps in the ubiquinone biosynthetic pathway. The polypeptide is Ubiquinone biosynthesis O-methyltransferase (Histophilus somni (strain 2336) (Haemophilus somnus)).